The primary structure comprises 172 residues: L-methionine sulfoximine/L-methionine sulfone acetyltransferase (172 aa).

Positions 3 to 166 constitute an N-acetyltransferase domain; sequence ASIRDAGVAD…DLTFMQLNLD (164 aa). Substrate contacts are provided by residues 75–77 and 85–87; these read RPF and EHS. Acetyl-CoA is bound by residues 88–90, 96–101, and N127; these read VYV and GKGLGV.

In terms of assembly, homodimer.

The catalysed reaction is L-methionine sulfoximine + acetyl-CoA = N-acetyl-L-methionine sulfoximine + CoA + H(+). It catalyses the reaction L-methionine sulfone + acetyl-CoA = N-acetyl-L-methionine sulfone + CoA + H(+). Its function is as follows. Plays a role in the resistance against the toxic effects of L-methionine sulfoximine (MSX), a rare amino acid, which inhibits glutamine synthetase (GlnA). Catalyzes the acetylation of L-methionine sulfoximine (MSX). It can also use L-methionine sulfone (MSO). The polypeptide is L-methionine sulfoximine/L-methionine sulfone acetyltransferase (Pseudomonas paraeruginosa (strain DSM 24068 / PA7) (Pseudomonas aeruginosa (strain PA7))).